The sequence spans 381 residues: tRNA pseudouridine synthase D (381 aa).

Asp81 acts as the Nucleophile in catalysis. One can recognise a TRUD domain in the interval 160-335; it reads GMPNYFGSQR…TLGSRRFFWV (176 aa).

The protein belongs to the pseudouridine synthase TruD family.

The catalysed reaction is uridine(13) in tRNA = pseudouridine(13) in tRNA. Functionally, responsible for synthesis of pseudouridine from uracil-13 in transfer RNAs. In Helicobacter pylori (strain P12), this protein is tRNA pseudouridine synthase D.